Reading from the N-terminus, the 392-residue chain is Histidinol-phosphate aminotransferase (392 aa).

The interval Met-1 to Pro-24 is disordered. Position 236 is an N6-(pyridoxal phosphate)lysine (Lys-236).

The protein belongs to the class-II pyridoxal-phosphate-dependent aminotransferase family. Histidinol-phosphate aminotransferase subfamily. As to quaternary structure, homodimer. The cofactor is pyridoxal 5'-phosphate.

It carries out the reaction L-histidinol phosphate + 2-oxoglutarate = 3-(imidazol-4-yl)-2-oxopropyl phosphate + L-glutamate. It participates in amino-acid biosynthesis; L-histidine biosynthesis; L-histidine from 5-phospho-alpha-D-ribose 1-diphosphate: step 7/9. This Xanthobacter autotrophicus (strain ATCC BAA-1158 / Py2) protein is Histidinol-phosphate aminotransferase.